Here is a 341-residue protein sequence, read N- to C-terminus: S-adenosylmethionine:tRNA ribosyltransferase-isomerase (341 aa).

It belongs to the QueA family. As to quaternary structure, monomer.

The protein localises to the cytoplasm. The enzyme catalyses 7-aminomethyl-7-carbaguanosine(34) in tRNA + S-adenosyl-L-methionine = epoxyqueuosine(34) in tRNA + adenine + L-methionine + 2 H(+). It functions in the pathway tRNA modification; tRNA-queuosine biosynthesis. Its function is as follows. Transfers and isomerizes the ribose moiety from AdoMet to the 7-aminomethyl group of 7-deazaguanine (preQ1-tRNA) to give epoxyqueuosine (oQ-tRNA). The protein is S-adenosylmethionine:tRNA ribosyltransferase-isomerase of Acetivibrio thermocellus (strain ATCC 27405 / DSM 1237 / JCM 9322 / NBRC 103400 / NCIMB 10682 / NRRL B-4536 / VPI 7372) (Clostridium thermocellum).